We begin with the raw amino-acid sequence, 1865 residues long: Endoribonuclease Dicer (1865 aa).

The 173-residue stretch at 41–213 folds into the Helicase ATP-binding domain; the sequence is LLEAALEHNT…DLEEKIQNLE (173 aa). 54 to 61 lines the ATP pocket; it reads LNTGSGKT. A DECH box motif is present at residues 161-164; that stretch reads DECH. Residues 397-417 form a disordered region; it reads SWSDSEDDDEDEEAEAKEKTE. The span at 400–411 shows a compositional bias: acidic residues; it reads DSEDDDEDEEAE. The 170-residue stretch at 419–588 folds into the Helicase C-terminal domain; sequence NFPSPFTNIL…SAECNDFELE (170 aa). The Dicer dsRNA-binding fold domain maps to 616–708; the sequence is AIGHVNRYCA…MPVGKETVKY (93 aa). A disordered region spans residues 713-732; it reads DLHDEEETSVPGRPGSTKRR. The PAZ domain maps to 881–1028; that stretch reads KFMEDIEKSE…LVPELCAIHP (148 aa). 2 stretches are compositionally biased toward polar residues: residues 1111–1128 and 1192–1201; these read GTSS…SMEV and STQTTTSVSV. 2 disordered regions span residues 1111–1142 and 1190–1259; these read GTSS…PDEK and DLST…DCRS. The span at 1240–1252 shows a compositional bias: low complexity; it reads SETATSTPAPSET. The RNase III 1 domain maps to 1262-1385; that stretch reads AGPAWDSPKT…TDKWDSDENK (124 aa). Mg(2+)-binding residues include Glu-1298, Asp-1377, and Asp-1380. The disordered stretch occupies residues 1373–1417; that stretch reads KSSTDKWDSDENKDLANGKASDDEDEDDDDEPEEAEVEPSKEDVN. The span at 1374 to 1388 shows a compositional bias: basic and acidic residues; sequence SSTDKWDSDENKDLA. Acidic residues predominate over residues 1394-1409; sequence DDEDEDDDDEPEEAEV. Residues 1609–1767 form the RNase III 2 domain; it reads FLNFESKINY…LAGAIYMDSG (159 aa). Mg(2+)-binding residues include Glu-1648, Asp-1753, and Glu-1756. The 66-residue stretch at 1792 to 1857 folds into the DRBM domain; sequence VPRSPVRELL…ARRALRSLKA (66 aa).

Belongs to the helicase family. Dicer subfamily. Component of the RISC loading complex (RLC), or micro-RNA (miRNA) loading complex (miRLC), which is composed of dicer1, ago2 and tarbp2; dicer1 and tarbp2 are required to process precursor miRNAs (pre-miRNAs) to mature miRNAs and then load them onto ago2. Note that the trimeric RLC/miRLC is also referred to as RISC. Requires Mg(2+) as cofactor. The cofactor is Mn(2+).

The protein localises to the cytoplasm. It catalyses the reaction Endonucleolytic cleavage to 5'-phosphomonoester.. Double-stranded RNA (dsRNA) endoribonuclease playing a central role in short dsRNA-mediated post-transcriptional gene silencing. Cleaves naturally occurring long dsRNAs and short hairpin pre-microRNAs (miRNA) into fragments of twenty-one to twenty-three nucleotides with 3' overhang of two nucleotides, producing respectively short interfering RNAs (siRNA) and mature microRNAs. SiRNAs and miRNAs serve as guide to direct the RNA-induced silencing complex (RISC) to complementary RNAs to degrade them or prevent their translation. Gene silencing mediated by siRNAs, also called RNA interference, controls the elimination of transcripts from mobile and repetitive DNA elements of the genome but also the degradation of exogenous RNA of viral origin for instance. The miRNA pathway on the other side is a mean to specifically regulate the expression of target genes. This chain is Endoribonuclease Dicer (dicer1), found in Danio rerio (Zebrafish).